The following is a 347-amino-acid chain: GMP reductase (347 aa).

108-131 lines the NADP(+) pocket; the sequence is ADFEKTKQILDLNPALNFVCIDVA. Residues glycine 181 and glycine 183 each coordinate K(+). Cysteine 186 functions as the Thioimidate intermediate in the catalytic mechanism. NADP(+) is bound at residue 216–239; the sequence is IVSDGGCTTPGDVAKAFGGGADFV.

Belongs to the IMPDH/GMPR family. GuaC type 1 subfamily. Homotetramer.

It carries out the reaction IMP + NH4(+) + NADP(+) = GMP + NADPH + 2 H(+). Catalyzes the irreversible NADPH-dependent deamination of GMP to IMP. It functions in the conversion of nucleobase, nucleoside and nucleotide derivatives of G to A nucleotides, and in maintaining the intracellular balance of A and G nucleotides. The chain is GMP reductase from Shigella boydii serotype 4 (strain Sb227).